A 413-amino-acid chain; its full sequence is Phosphopentomutase (413 aa).

Residues aspartate 11, aspartate 306, histidine 311, aspartate 347, histidine 348, and histidine 359 each contribute to the Mn(2+) site.

It belongs to the phosphopentomutase family. Mn(2+) is required as a cofactor.

It is found in the cytoplasm. The enzyme catalyses 2-deoxy-alpha-D-ribose 1-phosphate = 2-deoxy-D-ribose 5-phosphate. The catalysed reaction is alpha-D-ribose 1-phosphate = D-ribose 5-phosphate. Its pathway is carbohydrate degradation; 2-deoxy-D-ribose 1-phosphate degradation; D-glyceraldehyde 3-phosphate and acetaldehyde from 2-deoxy-alpha-D-ribose 1-phosphate: step 1/2. Its function is as follows. Isomerase that catalyzes the conversion of deoxy-ribose 1-phosphate (dRib-1-P) and ribose 1-phosphate (Rib-1-P) to deoxy-ribose 5-phosphate (dRib-5-P) and ribose 5-phosphate (Rib-5-P), respectively. The chain is Phosphopentomutase from Helicobacter pylori (strain G27).